A 118-amino-acid polypeptide reads, in one-letter code: UPF0102 protein STH1475 (118 aa).

Belongs to the UPF0102 family.

The chain is UPF0102 protein STH1475 from Symbiobacterium thermophilum (strain DSM 24528 / JCM 14929 / IAM 14863 / T).